Reading from the N-terminus, the 145-residue chain is Large ribosomal subunit protein bL17 (145 aa).

This sequence belongs to the bacterial ribosomal protein bL17 family. Part of the 50S ribosomal subunit. Contacts protein L32.

This chain is Large ribosomal subunit protein bL17, found in Orientia tsutsugamushi (strain Boryong) (Rickettsia tsutsugamushi).